The chain runs to 284 residues: 4-diphosphocytidyl-2-C-methyl-D-erythritol kinase (284 aa).

Residue lysine 10 is part of the active site. 92–102 is a binding site for ATP; that stretch reads PYGAGLGSGSS. Aspartate 134 is a catalytic residue.

Belongs to the GHMP kinase family. IspE subfamily.

The enzyme catalyses 4-CDP-2-C-methyl-D-erythritol + ATP = 4-CDP-2-C-methyl-D-erythritol 2-phosphate + ADP + H(+). The protein operates within isoprenoid biosynthesis; isopentenyl diphosphate biosynthesis via DXP pathway; isopentenyl diphosphate from 1-deoxy-D-xylulose 5-phosphate: step 3/6. Catalyzes the phosphorylation of the position 2 hydroxy group of 4-diphosphocytidyl-2C-methyl-D-erythritol. This chain is 4-diphosphocytidyl-2-C-methyl-D-erythritol kinase, found in Salinibacter ruber (strain DSM 13855 / M31).